Consider the following 234-residue polypeptide: S-adenosylmethionine synthase 1 (234 aa).

ATP contacts are provided by residues 10–12 (DGK), 78–81 (SGRF), Asp89, 95–96 (RK), Ala112, Lys116, and Lys120. Position 89 (Asp89) interacts with L-methionine. Residue Lys120 participates in L-methionine binding.

It belongs to the AdoMet synthase family. Homotetramer. The cofactor is Mn(2+). It depends on Mg(2+) as a cofactor. Co(2+) serves as cofactor. Requires K(+) as cofactor. Mainly in floral buds and roots.

It localises to the cytoplasm. It catalyses the reaction L-methionine + ATP + H2O = S-adenosyl-L-methionine + phosphate + diphosphate. It participates in amino-acid biosynthesis; S-adenosyl-L-methionine biosynthesis; S-adenosyl-L-methionine from L-methionine: step 1/1. Functionally, catalyzes the formation of S-adenosylmethionine from methionine and ATP. The reaction comprises two steps that are both catalyzed by the same enzyme: formation of S-adenosylmethionine (AdoMet) and triphosphate, and subsequent hydrolysis of the triphosphate. This Petroselinum crispum (Parsley) protein is S-adenosylmethionine synthase 1 (SMS-1).